Here is a 308-residue protein sequence, read N- to C-terminus: tRNA pseudouridine synthase B (308 aa).

Residue aspartate 48 is the Nucleophile of the active site.

This sequence belongs to the pseudouridine synthase TruB family. Type 1 subfamily.

The enzyme catalyses uridine(55) in tRNA = pseudouridine(55) in tRNA. Functionally, responsible for synthesis of pseudouridine from uracil-55 in the psi GC loop of transfer RNAs. This Histophilus somni (strain 129Pt) (Haemophilus somnus) protein is tRNA pseudouridine synthase B.